Consider the following 679-residue polypeptide: Glycine--tRNA ligase beta subunit (679 aa).

It belongs to the class-II aminoacyl-tRNA synthetase family. As to quaternary structure, tetramer of two alpha and two beta subunits.

Its subcellular location is the cytoplasm. It carries out the reaction tRNA(Gly) + glycine + ATP = glycyl-tRNA(Gly) + AMP + diphosphate. The chain is Glycine--tRNA ligase beta subunit from Streptococcus pyogenes serotype M18 (strain MGAS8232).